The primary structure comprises 100 residues: Urease subunit gamma (100 aa).

Belongs to the urease gamma subunit family. Probable heterotrimer of UreA (gamma), UreB (beta) and UreC (alpha) subunits. Three heterotrimers associate to form the active enzyme. The trimeric urease interacts with an accessory complex composed of UreD, UreF and UreG, which is required for the assembly of the nickel containing metallocenter of UreC. The UreE protein may also play a direct role in nickel transfer to the urease apoprotein.

The protein resides in the cytoplasm. It carries out the reaction urea + 2 H2O + H(+) = hydrogencarbonate + 2 NH4(+). The protein operates within nitrogen metabolism; urea degradation; CO(2) and NH(3) from urea (urease route): step 1/1. This is Urease subunit gamma from Proteus mirabilis (strain HI4320).